Consider the following 450-residue polypeptide: TATA box-binding protein-associated factor RNA polymerase I subunit A (450 aa).

Component of the transcription factor SL1/TIF-IB complex, composed of TBP and at least TAF1A, TAF1B, TAF1C and TAF1D. In the complex interacts directly with TBP, TAF1A and TAF1B. Interaction of the SL1/TIF-IB subunits with TBP excludes interaction of TBP with the transcription factor IID (TFIID) subunits. Interacts with UBFT. Interacts with CEBPA (isoform 1 and isoform 4). Part of Pol I pre-initiation complex (PIC), in which Pol I core assembles with RRN3 and promoter-bound UTBF and SL1/TIF-IB complex.

The protein resides in the nucleus. It is found in the nucleolus. Its function is as follows. Component of the transcription factor SL1/TIF-IB complex, which is involved in the assembly of the PIC (pre-initiation complex) during RNA polymerase I-dependent transcription. The rate of PIC formation probably is primarily dependent on the rate of association of SL1/TIF-IB with the rDNA promoter. SL1/TIF-IB is involved in stabilization of nucleolar transcription factor 1/UBTF on rDNA. Formation of SL1/TIF-IB excludes the association of TBP with TFIID subunits. The polypeptide is TATA box-binding protein-associated factor RNA polymerase I subunit A (TAF1A) (Homo sapiens (Human)).